We begin with the raw amino-acid sequence, 317 residues long: Porphobilinogen deaminase (317 aa).

The residue at position 245 (Cys-245) is an S-(dipyrrolylmethanemethyl)cysteine.

This sequence belongs to the HMBS family. In terms of assembly, monomer. Requires dipyrromethane as cofactor.

It catalyses the reaction 4 porphobilinogen + H2O = hydroxymethylbilane + 4 NH4(+). It functions in the pathway porphyrin-containing compound metabolism; protoporphyrin-IX biosynthesis; coproporphyrinogen-III from 5-aminolevulinate: step 2/4. Its pathway is porphyrin-containing compound metabolism; chlorophyll biosynthesis. In terms of biological role, tetrapolymerization of the monopyrrole PBG into the hydroxymethylbilane pre-uroporphyrinogen in several discrete steps. The chain is Porphobilinogen deaminase from Prochlorococcus marinus (strain MIT 9313).